An 82-amino-acid polypeptide reads, in one-letter code: Putative Fe(2+) transport protein A (82 aa).

Belongs to the FeoA family.

In terms of biological role, might be involved in Fe(2+) ion uptake. In Methanocaldococcus jannaschii (strain ATCC 43067 / DSM 2661 / JAL-1 / JCM 10045 / NBRC 100440) (Methanococcus jannaschii), this protein is Putative Fe(2+) transport protein A.